We begin with the raw amino-acid sequence, 320 residues long: GPI-specific phospholipase A2-like PGAP3 (320 aa).

The first 23 residues, 1 to 23 (MAKRTAPLLLLTLAVGLAGGSQG), serve as a signal peptide directing secretion. Over 24–98 (DREPVYRDCV…QFHGKWPFSR (75 aa)) the chain is Lumenal. N40 is a glycosylation site (N-linked (GlcNAc...) asparagine). The chain crosses the membrane as a helical span at residues 99-119 (FLFIQEPASAVASLLNGLASL). Residues 120 to 135 (VMLCRYRASVPASSPM) are Cytoplasmic-facing. The chain crosses the membrane as a helical span at residues 136-156 (YHTCMAFAWVSLNAWFWSTVF). Topologically, residues 157-169 (HTRDTDLTEKMDY) are lumenal. The chain crosses the membrane as a helical span at residues 170–190 (FCASAVILHSVYLCCVRTVGL). The Cytoplasmic segment spans residues 191–198 (QHPSVASA). Residues 199–219 (FGALLLLLLTGHISYLSLVHF) form a helical membrane-spanning segment. Topologically, residues 220-223 (DYGY) are lumenal. The helical transmembrane segment at 224-244 (NMMANVAIGLVNLAWWLVWCL) threads the bilayer. Residues 245–257 (RNRQRLPHTRRCM) lie on the Cytoplasmic side of the membrane. The chain crosses the membrane as a helical span at residues 258 to 278 (VVVVLLQGLSLLELLDFPPLF). W279 is a topological domain (lumenal). The chain crosses the membrane as a helical span at residues 280–299 (VLDAHAIWHISTIPVHTLFF). Over 300–320 (RFLEDDSLYLLKESGAMFKLD) the chain is Cytoplasmic.

This sequence belongs to the PGAP3 family.

Its subcellular location is the golgi apparatus membrane. In terms of biological role, involved in the fatty acid remodeling steps of GPI-anchor maturation where the unsaturated acyl chain at sn-2 of inositol phosphate is replaced by a saturated stearoyl chain. May catalyze the first step of the fatty acid remodeling, by removing the unsaturated acyl chain at sn-2 of inositol phosphate, generating a lyso-GPI intermediate. The fatty acid remodeling steps is critical for the integration of GPI-APs into lipid rafts. This chain is GPI-specific phospholipase A2-like PGAP3, found in Mus musculus (Mouse).